A 227-amino-acid chain; its full sequence is GTPase ERas (227 aa).

Over residues 1-19 the composition is skewed to polar residues; sequence MALPTKSSILDLSSGTPCT. The segment at 1–25 is disordered; that stretch reads MALPTKSSILDLSSGTPCTRSPEES. Position 48–55 (48–55) interacts with GTP; the sequence is GASGVGKS. The short motif at 70 to 78 is the Effector region element; that stretch reads HDPTIQDSY. Residues 95 to 99 and 151 to 154 each bind GTP; these read DTSGQ and NKCD. S-palmitoyl cysteine attachment occurs at residues C220 and C222. C224 is modified (cysteine methyl ester). C224 is lipidated: S-farnesyl cysteine. Positions 225–227 are cleaved as a propeptide — removed in mature form; it reads SVA.

It belongs to the small GTPase superfamily. Ras family. In terms of assembly, interacts with PIK3CD. Expressed in several undifferentiated mouse embryonic stem cell lines.

Its subcellular location is the cell membrane. It carries out the reaction GTP + H2O = GDP + phosphate + H(+). Alternates between an inactive form bound to GDP and an active form bound to GTP. Activated by a guanine nucleotide-exchange factor (GEF) and inactivated by a GTPase-activating protein (GAP). In terms of biological role, ras proteins bind GDP/GTP and possess intrinsic GTPase activity. Plays an important role in the tumor-like growth properties of embryonic stem cells. The sequence is that of GTPase ERas (Eras) from Mus musculus (Mouse).